Reading from the N-terminus, the 224-residue chain is MSNELTEIDEVVTSSQEEATQRDPVLDWFLTHCHLHKYPAKSTLIHAGEDATTLYYVIKGSVMVSSKDDEGKEMILTYLGAGQFFGEAGLFDEGSKRSAWVKTKTTCEIAEISYKKYRQLIQANPEILMFLTAQLARRLQNTSRQVTNLAFLDVAGRIAQTLMNLAKQPEAMTHPDGMQIKITRQEIGQMVGCSRETVGRIIKMLEDQNLIHAHGKTIVVYGAR.

The segment at 34–36 (HLH) is activating region 2 (AR2); probably contacts the N-terminus of RpoA. The segment at 67–73 (KDDEGKE) is activating region 3 (AR3); probably contacts sigma-70 (RpoD). Residues 71-77 (GKEMILT), 86-88 (GEA), and 97-98 (RS) each bind 3',5'-cyclic AMP. At lysine 115 the chain carries N6-acetyllysine. 3',5'-cyclic AMP contacts are provided by residues 142–143 (TS) and 150–151 (AF). The 73-residue stretch at 152–224 (LDVAGRIAQT…GKTIVVYGAR (73 aa)) folds into the HTH crp-type domain. Residues 168–177 (QPEAMTHPDG) form an activating region 1 (AR1); probably contacts the C-terminus of RpoA region. 3',5'-cyclic AMP is bound at residue 185-195 (QEIGQMVGCSR). A DNA-binding region (H-T-H motif) is located at residues 194 to 200 (SRETVGR).

As to quaternary structure, homodimer, which upon binding cAMP is able to bind DNA. Binds RNA polymerase subunit RpoA.

In terms of biological role, a global transcription regulator required for bacterial competence. Complexes with cyclic AMP (cAMP) which allosterically activates DNA binding (to consensus sequence 5'-AAATGTGATCTAGATCACATTT-3') to regulate transcription at 54 promoters. There are 2 consensus subclasses; CRP-N (above) and CRP-S (T6 changed to C and A17 changed to G) which obligatorily also requires Sxy for expression. CRP-S sites bind DNA but do not activate transcription in the absence of Sxy. Probably induces a severe bend in DNA. Probably acts as a negative regulator of its own synthesis as well as for adenylate cyclase (cyaA), which generates cAMP. This Haemophilus influenzae (strain ATCC 51907 / DSM 11121 / KW20 / Rd) protein is cAMP-activated global transcriptional regulator CRP (crp).